Consider the following 106-residue polypeptide: Small cardioactive peptide-related peptide (106 aa).

An N-terminal signal peptide occupies residues 1 to 20 (MFCKHLSFVAITICFLLVLA). Positions 21 to 41 (KTENEIQQKNIKFDQRTWRNM) are cleaved as a propeptide — amino-terminal spacer peptide. At Q52 the chain carries Glutamine amide. A propeptide spans 55–106 (SDNQPDYTCCGMPLTKYVGICPIGMECCPGLKKVLQKSGQRTIYSVCVADAY) (carboxy-terminal spacer peptide).

Expression is seen in the peripheral and central nervous systems in tissues such as the brain, the inferior buccal ganglion, the gastric ganglion, the olfactory lobe, the peduncle lobe and the optic lobe. Expression in the brain is distributed in the median inferior frontal lobe, the superior buccal lobe, the prebranchial lobe and the pedal lobe. Not expressed in the vasomotor lobe or the palliovisceral lobe that controls the cardiac system.

The protein localises to the secreted. Evokes contractions in the radula protractor muscle, and may regulate feeding behavior and gut motility by controlling muscle contraction of the buccal mass. In Octopus vulgaris (Common octopus), this protein is Small cardioactive peptide-related peptide.